We begin with the raw amino-acid sequence, 125 residues long: Large ribosomal subunit protein bL12 (125 aa).

Belongs to the bacterial ribosomal protein bL12 family. Homodimer. Part of the ribosomal stalk of the 50S ribosomal subunit. Forms a multimeric L10(L12)X complex, where L10 forms an elongated spine to which 2 to 4 L12 dimers bind in a sequential fashion. Binds GTP-bound translation factors.

Its function is as follows. Forms part of the ribosomal stalk which helps the ribosome interact with GTP-bound translation factors. Is thus essential for accurate translation. The chain is Large ribosomal subunit protein bL12 from Parabacteroides distasonis (strain ATCC 8503 / DSM 20701 / CIP 104284 / JCM 5825 / NCTC 11152).